Consider the following 245-residue polypeptide: Uridylate kinase (245 aa).

An ATP-binding site is contributed by 12–15 (KLSG). The segment at 20-25 (GEKGVG) is involved in allosteric activation by GTP. G54 is a UMP binding site. ATP-binding residues include G55 and R59. Residues D74 and 135–142 (IGSPYFST) each bind UMP. 3 residues coordinate ATP: N163, Y169, and D172.

Belongs to the UMP kinase family. As to quaternary structure, homohexamer.

The protein localises to the cytoplasm. It catalyses the reaction UMP + ATP = UDP + ADP. The protein operates within pyrimidine metabolism; CTP biosynthesis via de novo pathway; UDP from UMP (UMPK route): step 1/1. Its activity is regulated as follows. Allosterically activated by GTP. Inhibited by UTP. Its function is as follows. Catalyzes the reversible phosphorylation of UMP to UDP. In Streptococcus thermophilus (strain ATCC BAA-250 / LMG 18311), this protein is Uridylate kinase.